We begin with the raw amino-acid sequence, 221 residues long: Protein-L-isoaspartate O-methyltransferase (221 aa).

Ser-60 is a catalytic residue.

It belongs to the methyltransferase superfamily. L-isoaspartyl/D-aspartyl protein methyltransferase family.

It localises to the cytoplasm. The enzyme catalyses [protein]-L-isoaspartate + S-adenosyl-L-methionine = [protein]-L-isoaspartate alpha-methyl ester + S-adenosyl-L-homocysteine. In terms of biological role, catalyzes the methyl esterification of L-isoaspartyl residues in peptides and proteins that result from spontaneous decomposition of normal L-aspartyl and L-asparaginyl residues. It plays a role in the repair and/or degradation of damaged proteins. The polypeptide is Protein-L-isoaspartate O-methyltransferase (Rhodospirillum centenum (strain ATCC 51521 / SW)).